A 313-amino-acid chain; its full sequence is uncharacterized protein (313 aa).

Residues histidine 8, histidine 10, glutamate 126, histidine 180, histidine 207, and aspartate 262 each coordinate a divalent metal cation.

The protein belongs to the metallo-dependent hydrolases superfamily. TatD-type hydrolase family. It depends on a divalent metal cation as a cofactor.

In terms of biological role, putative deoxyribonuclease. This is an uncharacterized protein from Saccharomyces cerevisiae (strain ATCC 204508 / S288c) (Baker's yeast).